Consider the following 176-residue polypeptide: Probable non-specific lipid-transfer protein 1 (176 aa).

The first 37 residues, 1–37, serve as a signal peptide directing secretion; that stretch reads MRTVSAPSAVALVVIVAAGLAWTSLASVAPPAPAPGS. 4 disulfides stabilise this stretch: C41–C89, C51–C66, C67–C112, and C87–C128. Residues 139 to 176 are disordered; the sequence is QLPVSLRHGPVTGPSDPAHKARLERPQIRVPPPAPEKA. Basic and acidic residues predominate over residues 155–165; that stretch reads PAHKARLERPQ. A compositionally biased stretch (pro residues) spans 167–176; it reads RVPPPAPEKA.

This sequence belongs to the plant LTP family.

Functionally, plant non-specific lipid-transfer proteins transfer phospholipids as well as galactolipids across membranes. May play a role in wax or cutin deposition in the cell walls of expanding epidermal cells and certain secretory tissues. In Parietaria judaica (Pellitory-of-the-wall), this protein is Probable non-specific lipid-transfer protein 1.